The following is a 360-amino-acid chain: 4-hydroxy-3-methylbut-2-en-1-yl diphosphate synthase (flavodoxin) (360 aa).

The [4Fe-4S] cluster site is built by Cys-265, Cys-268, Cys-300, and Glu-307.

It belongs to the IspG family. It depends on [4Fe-4S] cluster as a cofactor.

The enzyme catalyses (2E)-4-hydroxy-3-methylbut-2-enyl diphosphate + oxidized [flavodoxin] + H2O + 2 H(+) = 2-C-methyl-D-erythritol 2,4-cyclic diphosphate + reduced [flavodoxin]. Its pathway is isoprenoid biosynthesis; isopentenyl diphosphate biosynthesis via DXP pathway; isopentenyl diphosphate from 1-deoxy-D-xylulose 5-phosphate: step 5/6. Functionally, converts 2C-methyl-D-erythritol 2,4-cyclodiphosphate (ME-2,4cPP) into 1-hydroxy-2-methyl-2-(E)-butenyl 4-diphosphate. The sequence is that of 4-hydroxy-3-methylbut-2-en-1-yl diphosphate synthase (flavodoxin) from Brevibacillus brevis (strain 47 / JCM 6285 / NBRC 100599).